A 920-amino-acid polypeptide reads, in one-letter code: MTFTFSTSSRKNGRPPLKSVSTEDNIHLLRKRRQQQLSSNSTDNSLHPNSGQTPRASDSQDDDIRSASTTNLDRLRQEREENSLEMDCTQSRLSHRANMLVDVLPSFEMYNALHRHIPQGNVDPDRHDFPPSYQEVRTQRMTILPSNDNSVERSQLTAVPGSENACNNATAHSLTNLHPLQTQHLTINSTRSGGQSLHSSSDTNISQIPFEDDLNDSDNIFIDKLYTLPKLSTPIEIDIRITKTASIPHERPEEQSILKEYTSGDIIHGYCLIENRSSQPLKFEMFYVTLEAYISVIDRQKGKRTLKRFLRMVDLSASWSYTNITPSTGINIVPGERDFDDAIIGLSNSRELKPNTKYKKFFMFKLPTQLLDVTCKQEQFSHCLLPPSFGIDKYKNNCKYSGIKVNSVLGCGHLGTKGSPILTLDMADDNLSINYTIDAKIVGKDKRTSKLNIMKEKEYNLRVMPFPFAGVTNQQNEKTCLRQLKNLESLIEDRFEALNKIFKKLELNEAISNVDIHDTDISGTLDGNEDLDSDEILRRKLDQLHINNRIDDTASQSPSYDSKNMAPKENLVETELRYKFKNKNKSNSSLFSHFLSSSETGSSSTGPHVYNSGLIVLSVKKPQSTLPYWSPSLLRKTNKFEAKSEQEKENWQRLMGMLPEGVKTPLTKLDVHLTCIQSNNSAGHKPPEISSVTTEFVVITAKSDNSIPIKFCTELLMNENRLNKLKTKFLTYQKKVHEYRKKFEENHAKLNELYNRNRDHFTPKELLFTNFISDQINNDIDSLAGLKVNIIDLHDIFKKQIHTFEEENEDIISKKGSSNPPSASSSNNNFLQATFSNGASTATKFTQQIVHEWEKVKPLQYKRDVTVNLKLNPNIKETLVPNLETCLCCRFYCVRVNIKFDNHLGSMKVDIPVDVKKLQI.

The span at 1-10 shows a compositional bias: polar residues; the sequence is MTFTFSTSSR. The interval 1–89 is disordered; it reads MTFTFSTSSR…EENSLEMDCT (89 aa). Thr-22 is subject to Phosphothreonine. The segment covering 35 to 57 has biased composition (polar residues); sequence QQLSSNSTDNSLHPNSGQTPRAS. Residues 73 to 82 show a composition bias toward basic and acidic residues; sequence DRLRQEREEN. Positions 129–133 match the PY-motif motif; sequence FPPSY. Ser-557 carries the phosphoserine modification.

Belongs to the BUL1 family. In terms of assembly, component of the RSP5-BUL1/2 ubiquitin ligase complex composed of at least RSP5 and BUL1 or BUL2.

Its subcellular location is the cytoplasm. It participates in protein modification; protein ubiquitination. In terms of biological role, component of a RSP5 ubiquitin ligase complex which specifies polyubiquitination and intracellular trafficking of the general amino acid permease GAP1 as well as other permeases such as PMA1. The RSP5-BUL1/2 complex is also necessary for the heat-shock element (HSE)-mediated gene expression, nitrogen starvation GLN3-dependent transcription and pressure-induced differential regulation of the 2 tryptophan permeases TAT1 and TAT2. The polypeptide is Ubiquitin ligase-binding protein BUL2 (BUL2) (Saccharomyces cerevisiae (strain ATCC 204508 / S288c) (Baker's yeast)).